Here is a 59-residue protein sequence, read N- to C-terminus: MAEPDPDIFDEDDEAILAADAEADADFEAGRTVPHERVGEWLKTLGTPHQTPPPYSWRK.

The disordered stretch occupies residues 38 to 59 (VGEWLKTLGTPHQTPPPYSWRK). A compositionally biased stretch (pro residues) spans 50-59 (QTPPPYSWRK).

In terms of biological role, antitoxin component of a type II toxin-antitoxin (TA) system. Neutralizes the effect of cognate toxin RelE4, but no other RelE or ParE toxin. The chain is Antitoxin RelB4 (relB4) from Caulobacter vibrioides (strain ATCC 19089 / CIP 103742 / CB 15) (Caulobacter crescentus).